Here is a 61-residue protein sequence, read N- to C-terminus: Adipokinetic prohormone type 2 (61 aa).

Positions 1 to 22 are cleaved as a signal peptide; the sequence is MTQSCTLTLVLVVAVLAALATA. Gln-23 is subject to Pyrrolidone carboxylic acid. Trp-30 bears the Tryptophan amide mark.

Belongs to the AKH/HRTH/RPCH family. In terms of assembly, adipokinetic hormone precursor-related peptide (APRP) can form three type of disulfide-bond dimers: p1 (alpha-alpha), p2 (alpha-beta), and p3 (beta-beta).

The protein resides in the secreted. In terms of biological role, this hormone, released from cells in the corpora cardiaca, causes release of diglycerides from the fat body and stimulation of muscles to use these diglycerides as an energy source during energy-demanding processes. This chain is Adipokinetic prohormone type 2, found in Locusta migratoria (Migratory locust).